The following is a 481-amino-acid chain: Glycogen synthase (481 aa).

Lys16 contributes to the ADP-alpha-D-glucose binding site.

The protein belongs to the glycosyltransferase 1 family. Bacterial/plant glycogen synthase subfamily.

The catalysed reaction is [(1-&gt;4)-alpha-D-glucosyl](n) + ADP-alpha-D-glucose = [(1-&gt;4)-alpha-D-glucosyl](n+1) + ADP + H(+). It functions in the pathway glycan biosynthesis; glycogen biosynthesis. Functionally, synthesizes alpha-1,4-glucan chains using ADP-glucose. The sequence is that of Glycogen synthase from Cellvibrio japonicus (strain Ueda107) (Pseudomonas fluorescens subsp. cellulosa).